A 413-amino-acid polypeptide reads, in one-letter code: THAP domain-containing protein 5 (413 aa).

The THAP-type zinc finger occupies 1–85 (MPRYCAASYC…LKHTAVPTIF (85 aa)). The tract at residues 84–118 (IFSSPDDEEKGSSQNSPQEIRREDQEETTKNVESK) is disordered. The segment covering 102-118 (EIRREDQEETTKNVESK) has biased composition (basic and acidic residues). Residues 375–399 (RLRSLEALIGQLKQENLLSEEKLKI) are a coiled coil.

It localises to the nucleus. The protein is THAP domain-containing protein 5 (THAP5) of Gallus gallus (Chicken).